The following is a 5218-amino-acid chain: HC-toxin synthetase (5218 aa).

Residues S223 to L620 are adenylation 1. In terms of domain architecture, Carrier 1 spans M769 to Q843. S803 bears the O-(pantetheine 4'-phosphoryl)serine mark. The condensation 1 stretch occupies residues I858–Y1154. The tract at residues E1338–A1806 is epimerization. The segment at S1828–M2233 is adenylation 2. The Carrier 2 domain maps to E2379 to Q2453. Position 2414 is an O-(pantetheine 4'-phosphoryl)serine (S2414). The condensation 2 stretch occupies residues E2531–T2929. The segment at L2979–R3386 is adenylation 3. The region spanning Q3532 to Q3608 is the Carrier 3 domain. Position 3569 is an O-(pantetheine 4'-phosphoryl)serine (S3569). Positions E3649–E4102 are condensation 3. Residues R4134–S4530 form an adenylation 4 region. The Carrier 4 domain occupies T4666 to N4740. S4701 carries the post-translational modification O-(pantetheine 4'-phosphoryl)serine. The segment at T4785–A5101 is condensation 4.

Belongs to the NRP synthetase family. Pantetheine 4'-phosphate is required as a cofactor.

It participates in mycotoxin biosynthesis; HC-toxin biosynthesis. Non-ribosomal peptide synthetase, part of the diffuse TOX2 gene cluster that mediates the biosynthesis of the HC-toxin, cyclic tetrapeptide of structure cyclo(D-Pro-L-Ala-D-Ala-L-Aeo), where Aeo stands for 2-amino-9,10-epoxi-8-oxodecanoic acid. HC-toxin is a determinant of specificity and virulence in the interaction between the producing fungus and its host, maize. HTS1, contains four modules, one for each amino acid in HC-toxin, with the order of activation being most likely Pro, Ala, Ala, and Aeo. In addition, HTS1 has one epimerase domain between modules 1 and 2, which is responsible for epimerizing L-Pro to D-Pro. The absence of an epimerizing domain after module 3, for producing D-Ala, can be explained by the presence in the cluster of TOXG, an Ala racemase, which produces D-Ala for incorporation by HTS1 into HC-toxin. The sequence is that of HC-toxin synthetase from Cochliobolus carbonum (Maize leaf spot fungus).